A 265-amino-acid chain; its full sequence is 4-hydroxy-tetrahydrodipicolinate reductase (265 aa).

Glycine 9 to methionine 14 is an NAD(+) binding site. Arginine 37 contacts NADP(+). Residues glycine 98–threonine 100 and alanine 124–phenylalanine 127 contribute to the NAD(+) site. Histidine 154 serves as the catalytic Proton donor/acceptor. Residue histidine 155 coordinates (S)-2,3,4,5-tetrahydrodipicolinate. Lysine 158 serves as the catalytic Proton donor. Glycine 164–threonine 165 serves as a coordination point for (S)-2,3,4,5-tetrahydrodipicolinate.

Belongs to the DapB family.

Its subcellular location is the cytoplasm. The enzyme catalyses (S)-2,3,4,5-tetrahydrodipicolinate + NAD(+) + H2O = (2S,4S)-4-hydroxy-2,3,4,5-tetrahydrodipicolinate + NADH + H(+). It carries out the reaction (S)-2,3,4,5-tetrahydrodipicolinate + NADP(+) + H2O = (2S,4S)-4-hydroxy-2,3,4,5-tetrahydrodipicolinate + NADPH + H(+). Its pathway is amino-acid biosynthesis; L-lysine biosynthesis via DAP pathway; (S)-tetrahydrodipicolinate from L-aspartate: step 4/4. Functionally, catalyzes the conversion of 4-hydroxy-tetrahydrodipicolinate (HTPA) to tetrahydrodipicolinate. The polypeptide is 4-hydroxy-tetrahydrodipicolinate reductase (Geobacillus kaustophilus (strain HTA426)).